Reading from the N-terminus, the 171-residue chain is Co-chaperone protein HscB (171 aa).

The 73-residue stretch at 2 to 74 folds into the J domain; that stretch reads DYFTLFGLPA…LTRAEYLLSL (73 aa).

This sequence belongs to the HscB family. As to quaternary structure, interacts with HscA and stimulates its ATPase activity. Interacts with IscU.

Its function is as follows. Co-chaperone involved in the maturation of iron-sulfur cluster-containing proteins. Seems to help targeting proteins to be folded toward HscA. In Salmonella arizonae (strain ATCC BAA-731 / CDC346-86 / RSK2980), this protein is Co-chaperone protein HscB.